The chain runs to 224 residues: Phosphoribosylformylglycinamidine synthase subunit PurQ (224 aa).

The Glutamine amidotransferase type-1 domain occupies 4-224; it reads RIGVITFPGT…YSALDSVLAS (221 aa). Catalysis depends on Cys-87, which acts as the Nucleophile. Active-site residues include His-195 and Glu-197.

In terms of assembly, part of the FGAM synthase complex composed of 1 PurL, 1 PurQ and 2 PurS subunits.

It localises to the cytoplasm. It carries out the reaction N(2)-formyl-N(1)-(5-phospho-beta-D-ribosyl)glycinamide + L-glutamine + ATP + H2O = 2-formamido-N(1)-(5-O-phospho-beta-D-ribosyl)acetamidine + L-glutamate + ADP + phosphate + H(+). The catalysed reaction is L-glutamine + H2O = L-glutamate + NH4(+). The protein operates within purine metabolism; IMP biosynthesis via de novo pathway; 5-amino-1-(5-phospho-D-ribosyl)imidazole from N(2)-formyl-N(1)-(5-phospho-D-ribosyl)glycinamide: step 1/2. Functionally, part of the phosphoribosylformylglycinamidine synthase complex involved in the purines biosynthetic pathway. Catalyzes the ATP-dependent conversion of formylglycinamide ribonucleotide (FGAR) and glutamine to yield formylglycinamidine ribonucleotide (FGAM) and glutamate. The FGAM synthase complex is composed of three subunits. PurQ produces an ammonia molecule by converting glutamine to glutamate. PurL transfers the ammonia molecule to FGAR to form FGAM in an ATP-dependent manner. PurS interacts with PurQ and PurL and is thought to assist in the transfer of the ammonia molecule from PurQ to PurL. The chain is Phosphoribosylformylglycinamidine synthase subunit PurQ from Mycobacterium leprae (strain TN).